The sequence spans 561 residues: MAPANTLSAWSDLQSHHSKVGKTFVLKDAFKSDPERFSKFARTFTLPADISSDSPNATDILFDFSKNLVTEETLDKLVRLAEEAGVEKKRDAMFAGEKINFTEDRAVYHVALRNVSNQEMKVDGVDVMNTKGGVNEVLQHMKEFSEQVRSGEWKGYTGKKLTNIINIGIGGSDLGPVMVTEALKHYGAKDMTLRFVSNVDGTHIAEALAASDPETTLFLIASKTFTTAETITNANTAKSWFLEKTGGQGDITKHFVALSTNEAEVTKFGIDAKNMFGFESWVGGRYSVWSAIGLSVALYVGYENFHKFLAGAHAMDNHFRTAPLKENIPVLGGILSVWYSNFYNAQTHLIAPFDQYLHRFPAYLQQLSMESNGKSITSDGSAAKYTTGPIVFGEPCTNAQHSFFQLVHQGTKLIPADFILAAKSHNPISNNLHQKMLASNYLAQAEALMVGKTAEEVRAEGNVPEHLVPHKVFLGNRPTTSILVGGHIGPAELGALIVYYEHLTFTEGAIWDINSFDQWGVELGKVLAKKILKEIDEPGAGSGHDASTGGLLGAFKKYADF.

D-glucose 6-phosphate-binding positions include 171–172, 222–227, Gln366, Glu370, His401, and Lys525; these read GS and SKTFTT. Glu370 acts as the Proton donor in catalysis. Residues His401 and Lys525 contribute to the active site.

It belongs to the GPI family. As to quaternary structure, homodimer.

It is found in the cytoplasm. It localises to the cytosol. The enzyme catalyses alpha-D-glucose 6-phosphate = beta-D-fructose 6-phosphate. The protein operates within carbohydrate degradation; glycolysis; D-glyceraldehyde 3-phosphate and glycerone phosphate from D-glucose: step 2/4. In the cytoplasm, catalyzes the conversion of glucose-6-phosphate to fructose-6-phosphate, the second step in glycolysis, and the reverse reaction during gluconeogenesis. This is Glucose-6-phosphate isomerase (pgi-1) from Neurospora crassa (strain ATCC 24698 / 74-OR23-1A / CBS 708.71 / DSM 1257 / FGSC 987).